The chain runs to 248 residues: DNA polymerase sliding clamp (248 aa).

It belongs to the PCNA family. Homotrimer. The subunits circularize to form a toroid; DNA passes through its center. Replication factor C (RFC) is required to load the toroid on the DNA.

Its function is as follows. Sliding clamp subunit that acts as a moving platform for DNA processing. Responsible for tethering the catalytic subunit of DNA polymerase and other proteins to DNA during high-speed replication. The polypeptide is DNA polymerase sliding clamp (Cenarchaeum symbiosum (strain A)).